Reading from the N-terminus, the 161-residue chain is Transcriptional repressor NrdR (161 aa).

Residues 1–23 (MRCPFCGHPDTQVKDSRPAEDGN) form a disordered region. Residues 3-34 (CPFCGHPDTQVKDSRPAEDGNAIRRRRQCPSC) fold into a zinc finger. Residues 11 to 23 (TQVKDSRPAEDGN) are compositionally biased toward basic and acidic residues. The ATP-cone domain occupies 49–139 (LTVMKKSGRR…VYKDFHKVED (91 aa)).

Belongs to the NrdR family. Zn(2+) serves as cofactor.

Its function is as follows. Negatively regulates transcription of bacterial ribonucleotide reductase nrd genes and operons by binding to NrdR-boxes. This Maricaulis maris (strain MCS10) (Caulobacter maris) protein is Transcriptional repressor NrdR.